A 79-amino-acid polypeptide reads, in one-letter code: U-myrmeciitoxin(01)-Mg9a (79 aa).

The signal sequence occupies residues M1–A21. The propeptide occupies P22–P48. Residue Q78 is modified to Glutamine amide.

Expressed by the venom gland.

It localises to the secreted. Its function is as follows. May have antimicrobial properties, like most ant linear peptides. This chain is U-myrmeciitoxin(01)-Mg9a, found in Myrmecia gulosa (Red bulldog ant).